The chain runs to 57 residues: DNA-directed RNA polymerase subunit Rpo6 (57 aa).

It belongs to the archaeal Rpo6/eukaryotic RPB6 RNA polymerase subunit family. Part of the RNA polymerase complex.

Its subcellular location is the cytoplasm. The catalysed reaction is RNA(n) + a ribonucleoside 5'-triphosphate = RNA(n+1) + diphosphate. Its function is as follows. DNA-dependent RNA polymerase (RNAP) catalyzes the transcription of DNA into RNA using the four ribonucleoside triphosphates as substrates. The sequence is that of DNA-directed RNA polymerase subunit Rpo6 from Pyrococcus abyssi (strain GE5 / Orsay).